The following is a 356-amino-acid chain: GTPase HflX (356 aa).

Positions 180–356 constitute a Hflx-type G domain; sequence PSIGIVGYTN…KIYQLATQLS (177 aa). Residues 186 to 193, 211 to 215, 232 to 235, 300 to 303, and 334 to 336 each bind GTP; these read GYTNSGKT, FTTMS, DTVG, NKID, and SAL. Residues Thr193 and Thr213 each contribute to the Mg(2+) site.

It belongs to the TRAFAC class OBG-HflX-like GTPase superfamily. HflX GTPase family. As to quaternary structure, monomer. Associates with the 50S ribosomal subunit. Does not associate with 70S ribosomes. It depends on Mg(2+) as a cofactor.

The protein resides in the cytoplasm. Its activity is regulated as follows. GTPase activity is stimulated by the presence of 50S ribosomal subunits. Hydrolysis is probably regulated by the HflX N-terminal domain. Functionally, GTPase that associates with the 50S ribosomal subunit and may have a role during protein synthesis or ribosome biogenesis. Specific for GTP. The sequence is that of GTPase HflX from Saccharolobus solfataricus (strain ATCC 35092 / DSM 1617 / JCM 11322 / P2) (Sulfolobus solfataricus).